The chain runs to 323 residues: Calcium homeostasis modulator protein 2 (323 aa).

The Cytoplasmic segment spans residues 1 to 21; the sequence is MAALIAENFRFLSLFFKSKDV. A central pore region spans residues 14 to 39; it reads LFFKSKDVMIFNGLVALGTVGSQELF. A helical membrane pass occupies residues 22 to 43; it reads MIFNGLVALGTVGSQELFSVVA. The Extracellular segment spans residues 44–52; sequence FHCPCSPAR. 2 disulfides stabilise this stretch: C46–C130 and C48–C162. A helical membrane pass occupies residues 53–76; it reads NYLYGLTAIGVPALALFLIGVILN. The Cytoplasmic segment spans residues 77–101; it reads NHTWNLVAECQYRRAKNCSAAPNFL. A helical membrane pass occupies residues 102–132; it reads LLSSILGRAAVAPVTWSVISLLRGEAYVCAL. At 133–179 the chain is on the extracellular side; the sequence is SEFVDPSSLTAGDKGFPPAHATEVLARFPCGEGPANLSSFREEVSRR. A hemichannel docking region spans residues 145–152; the sequence is DKGFPPAH. The chain crosses the membrane as a helical span at residues 180 to 206; that stretch reads LKYESQLFGWLLIGVVAILVFLTKCLK. Residues 207-323 lie on the Cytoplasmic side of the membrane; it reads HYCSPLSYRQ…DNVEMALLTA (117 aa). Residues 214-251 form an intersubunit interaction region; that stretch reads YRQEAYWAQYRTNEDQLFQRTAEVHSRVLAANNVRRFF.

This sequence belongs to the CALHM family. In terms of assembly, homo-undecamer. Two undecameric hemichannels can assemble in a head-to-head manner to form a gap junction. In terms of tissue distribution, neuron, astrocyte, and microglia.

Its subcellular location is the cell membrane. It catalyses the reaction ATP(in) = ATP(out). With respect to regulation, inhibited by divalent cations such as Co(2+) and Ni(2+). Its function is as follows. Pore-forming subunit of Ca(2+) homeostasis modulator channels. Mediates ATP release from astrocytes and ATP-induced Ca(2+) influx in microglia thus regulating neuronal ATP and Ca(2+) homeostasis, synaptic transmission and neuroinflammatory response. May form intercellular gap junctions. The gating mechanism remains unknown. This is Calcium homeostasis modulator protein 2 from Mus musculus (Mouse).